The chain runs to 133 residues: Inhibitor of g-type lysozyme (133 aa).

The signal sequence occupies residues 1-22; it reads MKIKSIRKAVLLLALLTSTSFA.

The protein resides in the periplasm. Its function is as follows. Inhibits activity of g-type lysozyme, which confers increased lysozyme tolerance to the bacterium. This Escherichia coli (strain K12) protein is Inhibitor of g-type lysozyme (pliG).